We begin with the raw amino-acid sequence, 443 residues long: Xaa-Pro dipeptidase (443 aa).

5 residues coordinate Mn(2+): aspartate 248, aspartate 259, histidine 339, glutamate 384, and glutamate 423.

Belongs to the peptidase M24B family. Bacterial-type prolidase subfamily. Requires Mn(2+) as cofactor.

The catalysed reaction is Xaa-L-Pro dipeptide + H2O = an L-alpha-amino acid + L-proline. Splits dipeptides with a prolyl residue in the C-terminal position. This is Xaa-Pro dipeptidase from Colwellia psychrerythraea (strain 34H / ATCC BAA-681) (Vibrio psychroerythus).